A 131-amino-acid polypeptide reads, in one-letter code: uncharacterized protein (131 aa).

This is an uncharacterized protein from Caenorhabditis elegans.